Here is a 174-residue protein sequence, read N- to C-terminus: Interleukin-1 receptor antagonist protein (174 aa).

Positions 1–23 (MDIYIHGYLICLLLFLFRSETAC) are cleaved as a signal peptide. Cysteines 89 and 139 form a disulfide. An N-linked (GlcNAc...) asparagine glycan is attached at Asn107.

It belongs to the IL-1 family.

It localises to the secreted. In terms of biological role, anti-inflammatory antagonist of interleukin-1 family of proinflammatory cytokines such as interleukin-1beta/IL1B and interleukin-1alpha/IL1A. Protects from immune dysregulation and uncontrolled systemic inflammation triggered by IL1 for a range of innate stimulatory agents such as pathogens. In Bos taurus (Bovine), this protein is Interleukin-1 receptor antagonist protein (IL1RN).